The sequence spans 1308 residues: Contactin-associated protein-like 4 (1308 aa).

Residues 1–25 (MGSVTGAVLKTLLLLSTQNWNRVEA) form the signal peptide. Residues 26–1241 (GNSYDCDDPL…LANAIKSDSA (1216 aa)) are Extracellular-facing. Residues 31-177 (CDDPLVSALP…IGMRIEVFGC (147 aa)) form the F5/8 type C domain. A disulfide bond links Cys-31 and Cys-177. 2 consecutive Laminin G-like domains span residues 212–364 (FKTM…SFSC) and 398–547 (FRTW…IDSC). Residues Asn-260, Asn-285, Asn-359, and Asn-538 are each glycosylated (N-linked (GlcNAc...) asparagine). 4 cysteine pairs are disulfide-bonded: Cys-332/Cys-364, Cys-515/Cys-547, Cys-553/Cys-564, and Cys-558/Cys-573. An EGF-like 1 domain is found at 549-586 (ISDRCLPNYCEHGGECSQSWSTFHCNCTNTGYRGATCH). Asn-574 carries an N-linked (GlcNAc...) asparagine glycan. Cys-575 and Cys-585 are disulfide-bonded. Residues 587-792 (NSIYEQSCEA…LLCQGDRSFW (206 aa)) form the Fibrinogen C-terminal domain. 5 N-linked (GlcNAc...) asparagine glycosylation sites follow: Asn-602, Asn-625, Asn-637, Asn-706, and Asn-748. The Laminin G-like 3 domain maps to 793 to 957 (NSASFDTEAS…AQVTPEVQPG (165 aa)). 4 disulfide bridges follow: Cys-931–Cys-958, Cys-962–Cys-975, Cys-969–Cys-984, and Cys-986–Cys-996. The EGF-like 2 domain maps to 958-997 (CRGHCSSYGKLCRNGGKCRERPIGFFCDCTFSAYTGPFCS). Asn-1023 and Asn-1073 each carry an N-linked (GlcNAc...) asparagine glycan. The 157-residue stretch at 1046–1202 (FRTTRTPSLL…VTGHVTESSC (157 aa)) folds into the Laminin G-like 4 domain. A disulfide bridge links Cys-1167 with Cys-1202. The helical transmembrane segment at 1242–1262 (VIGGLIAVVIFILLCITAIAV) threads the bilayer. The Cytoplasmic portion of the chain corresponds to 1263–1308 (RIYQQKRLYKRSEAKRSENVDSAEAVLKSELNIQNAVNENQKEYFF).

It belongs to the neurexin family. In terms of assembly, interacts with TIAM1.

The protein resides in the presynaptic cell membrane. Presynaptic protein involved in both dopaminergic synaptic transmission and GABAergic system, thereby participating in the structural maturation of inhibitory interneuron synapses. Involved in the dopaminergic synaptic transmission by attenuating dopamine release through a presynaptic mechanism. Also participates in the GABAergic system. In Homo sapiens (Human), this protein is Contactin-associated protein-like 4 (CNTNAP4).